A 74-amino-acid polypeptide reads, in one-letter code: U-scoloptoxin(09)-Sm3a (74 aa).

The signal sequence occupies residues 1–22; that stretch reads MNANSIFLCFFIMLIGCTLTHS.

It belongs to the scoloptoxin-09 family. In terms of processing, contains 3 disulfide bonds. As to expression, expressed by the venom gland.

It is found in the secreted. This is U-scoloptoxin(09)-Sm3a from Scolopendra morsitans (Tanzanian blue ringleg centipede).